Reading from the N-terminus, the 437-residue chain is Trigger factor (437 aa).

Residues 161–246 (GDQVNINFVG…VNSVSEAVLP (86 aa)) form the PPIase FKBP-type domain.

Belongs to the FKBP-type PPIase family. Tig subfamily.

It is found in the cytoplasm. The enzyme catalyses [protein]-peptidylproline (omega=180) = [protein]-peptidylproline (omega=0). In terms of biological role, involved in protein export. Acts as a chaperone by maintaining the newly synthesized protein in an open conformation. Functions as a peptidyl-prolyl cis-trans isomerase. The polypeptide is Trigger factor (Cellvibrio japonicus (strain Ueda107) (Pseudomonas fluorescens subsp. cellulosa)).